Here is a 416-residue protein sequence, read N- to C-terminus: Formyl-CoA:oxalate CoA-transferase (416 aa).

CoA-binding positions include 17–18 (QS), R38, 72–75 (LNTK), 96–98 (NFH), H104, and 137–140 (KAYE). The active-site Nucleophile is D169. A substrate-binding site is contributed by 248 to 250 (GGQ). 273-275 (QEQ) is a CoA binding site.

It belongs to the CoA-transferase III family. Frc subfamily. Homodimer.

It carries out the reaction formyl-CoA + oxalate = oxalyl-CoA + formate. It functions in the pathway metabolic intermediate degradation; oxalate degradation; CO(2) and formate from oxalate: step 1/2. Its function is as follows. Involved in the catabolism of oxalate and in the adapatation to low pH via the induction of the oxalate-dependent acid tolerance response (ATR). Catalyzes the transfer of the CoA moiety from formyl-CoA to oxalate. In Shigella boydii serotype 18 (strain CDC 3083-94 / BS512), this protein is Formyl-CoA:oxalate CoA-transferase.